The sequence spans 85 residues: YcgL domain-containing protein ECA2367 (85 aa).

One can recognise a YcgL domain in the interval 1 to 85 (MFCVIYRSVK…PVESLLTTPV (85 aa)).

The chain is YcgL domain-containing protein ECA2367 from Pectobacterium atrosepticum (strain SCRI 1043 / ATCC BAA-672) (Erwinia carotovora subsp. atroseptica).